The following is a 458-amino-acid chain: uncharacterized protein (458 aa).

Residues 5 to 65 (QAPVNKNDVV…KGYGFGRVLN (61 aa)) enclose the TRAM domain. [4Fe-4S] cluster-binding residues include cysteine 78, cysteine 84, cysteine 87, and cysteine 165. 4 residues coordinate S-adenosyl-L-methionine: glutamine 289, tyrosine 318, glutamate 339, and aspartate 387. Catalysis depends on cysteine 414, which acts as the Nucleophile.

This sequence belongs to the class I-like SAM-binding methyltransferase superfamily. RNA M5U methyltransferase family.

This is an uncharacterized protein from Halalkalibacterium halodurans (strain ATCC BAA-125 / DSM 18197 / FERM 7344 / JCM 9153 / C-125) (Bacillus halodurans).